A 398-amino-acid chain; its full sequence is Putative defective protein IntQ (398 aa).

The 96-residue stretch at L51–V146 folds into the Core-binding (CB) domain. In terms of domain architecture, Tyr recombinase spans T167–L378. Active-site residues include R202, K236, R331, and H354. Residue Y364 is the O-(3'-phospho-DNA)-tyrosine intermediate of the active site.

This sequence belongs to the 'phage' integrase family.

In terms of biological role, integrase is necessary for integration of the phage into the host genome by site-specific recombination. In conjunction with excisionase, integrase is also necessary for excision of the prophage from the host genome. In Escherichia coli (strain K12), this protein is Putative defective protein IntQ (intQ).